The sequence spans 300 residues: Cation-efflux pump FieF (300 aa).

A run of 4 helical transmembrane segments spans residues Ala-12–Trp-32, Ile-39–Val-59, Ala-82–Ile-102, and Pro-114–Phe-134. 2 residues coordinate Zn(2+): Asp-45 and Asp-49. 2 residues coordinate Zn(2+): His-153 and Asp-157. The next 2 membrane-spanning stretches (helical) occupy residues Ser-156 to His-176 and Ala-178 to Gly-198.

It belongs to the cation diffusion facilitator (CDF) transporter (TC 2.A.4) family. FieF subfamily. As to quaternary structure, homodimer.

Its subcellular location is the cell inner membrane. The catalysed reaction is Zn(2+)(in) + H(+)(out) = Zn(2+)(out) + H(+)(in). It carries out the reaction Cd(2+)(in) + H(+)(out) = Cd(2+)(out) + H(+)(in). The enzyme catalyses Fe(2+)(in) + H(+)(out) = Fe(2+)(out) + H(+)(in). Functionally, divalent metal cation transporter which exports Zn(2+), Cd(2+) and possibly Fe(2+). May be involved in zinc and iron detoxification by efflux. This chain is Cation-efflux pump FieF, found in Shigella flexneri serotype 5b (strain 8401).